Consider the following 256-residue polypeptide: Enolase-phosphatase E1 (256 aa).

Mg(2+) contacts are provided by Asp14 and Glu16. Substrate contacts are provided by residues 142–143 (SS) and Lys176. Asp201 contributes to the Mg(2+) binding site.

Belongs to the HAD-like hydrolase superfamily. MasA/MtnC family. In terms of assembly, monomer. It depends on Mg(2+) as a cofactor.

It is found in the cytoplasm. Its subcellular location is the nucleus. It carries out the reaction 5-methylsulfanyl-2,3-dioxopentyl phosphate + H2O = 1,2-dihydroxy-5-(methylsulfanyl)pent-1-en-3-one + phosphate. Its pathway is amino-acid biosynthesis; L-methionine biosynthesis via salvage pathway; L-methionine from S-methyl-5-thio-alpha-D-ribose 1-phosphate: step 3/6. The protein operates within amino-acid biosynthesis; L-methionine biosynthesis via salvage pathway; L-methionine from S-methyl-5-thio-alpha-D-ribose 1-phosphate: step 4/6. Bifunctional enzyme that catalyzes the enolization of 2,3-diketo-5-methylthiopentyl-1-phosphate (DK-MTP-1-P) into the intermediate 2-hydroxy-3-keto-5-methylthiopentenyl-1-phosphate (HK-MTPenyl-1-P), which is then dephosphorylated to form the acireductone 1,2-dihydroxy-3-keto-5-methylthiopentene (DHK-MTPene). This Drosophila sechellia (Fruit fly) protein is Enolase-phosphatase E1.